The sequence spans 70 residues: Small ribosomal subunit protein bS21 (70 aa).

The protein belongs to the bacterial ribosomal protein bS21 family.

The protein is Small ribosomal subunit protein bS21 of Sulfurovum sp. (strain NBC37-1).